Here is a 456-residue protein sequence, read N- to C-terminus: Enolase (456 aa).

Residue Q169 coordinates (2R)-2-phosphoglycerate. The active-site Proton donor is the E211. Residues D252, E314, and D341 each coordinate Mg(2+). 4 residues coordinate (2R)-2-phosphoglycerate: K366, R395, S396, and K417. The active-site Proton acceptor is K366.

This sequence belongs to the enolase family. Mg(2+) serves as cofactor.

Its subcellular location is the cytoplasm. The protein localises to the secreted. The protein resides in the cell surface. The catalysed reaction is (2R)-2-phosphoglycerate = phosphoenolpyruvate + H2O. Its pathway is carbohydrate degradation; glycolysis; pyruvate from D-glyceraldehyde 3-phosphate: step 4/5. In terms of biological role, catalyzes the reversible conversion of 2-phosphoglycerate (2-PG) into phosphoenolpyruvate (PEP). It is essential for the degradation of carbohydrates via glycolysis. This is Enolase from Metamycoplasma arthritidis (strain 158L3-1) (Mycoplasma arthritidis).